Reading from the N-terminus, the 673-residue chain is Xaa-Pro aminopeptidase 2 (673 aa).

The N-terminal stretch at 1 to 21 is a signal peptide; the sequence is MAQACWGCYPWLVLICACAWG. N-linked (GlcNAc...) asparagine glycosylation is found at Asn-34, Asn-48, and Asn-64. Arg-115 provides a ligand contact to substrate. 3 N-linked (GlcNAc...) asparagine glycosylation sites follow: Asn-277, Asn-290, and Asn-294. His-429 contributes to the substrate binding site. Asp-449 is a Mn(2+) binding site. The Zn(2+) site is built by Asp-449, Asp-460, and His-523. Positions 523, 532, and 554 each coordinate substrate. Zn(2+)-binding residues include Glu-554 and Glu-568. Ala-649 carries GPI-anchor amidated alanine lipidation. Residues 650–673 constitute a propeptide, removed in mature form; it reads RAAPTTSLGSLMTVSALAILGWSV.

It belongs to the peptidase M24B family. Homotrimer. It depends on Zn(2+) as a cofactor. In terms of processing, N-glycosylated. Kidney.

It localises to the cell membrane. The enzyme catalyses Release of any N-terminal amino acid, including proline, that is linked to proline, even from a dipeptide or tripeptide.. Its activity is regulated as follows. Inhibited by apstatin and the metal ion chelator EDTA. Potently inhibited by the converting enzyme inhibitors cilazaprilat; enalaprilat; L155,212; ramiprilat and YS 980. Also inhibited to a lesser extent by indolaprilat; quinaprilat; spiraprilat; captopril and zofenoprilat. Functionally, membrane-bound metalloprotease which catalyzes the removal of a penultimate prolyl residue from the N-termini of peptides, such as Arg-Pro-Pro. May play a role in the metabolism of the vasodilator bradykinin. In Sus scrofa (Pig), this protein is Xaa-Pro aminopeptidase 2 (XPNPEP2).